Here is a 349-residue protein sequence, read N- to C-terminus: Ureidoglycolate dehydrogenase (NAD(+)) (349 aa).

His116 (proton acceptor) is an active-site residue. Residues Ser140, 174–176 (DMA), Lys224, and 306–308 (GQD) each bind NAD(+).

This sequence belongs to the LDH2/MDH2 oxidoreductase family. Homodimer.

The protein localises to the cytoplasm. It carries out the reaction (S)-ureidoglycolate + NAD(+) = N-carbamoyl-2-oxoglycine + NADH + H(+). The protein operates within nitrogen metabolism; (S)-allantoin degradation; oxalurate from (S)-ureidoglycolate: step 1/1. In terms of biological role, allD plays a pivotal role as a metabolic branch-point enzyme in nitrogen utilization via the assimilation of allantoin. It is able to utilize allantoin as a sole source of nitrogen under anaerobic conditions. Catalyzes the oxidation of ureidoglycolate to oxalurate. The polypeptide is Ureidoglycolate dehydrogenase (NAD(+)) (Escherichia coli (strain K12)).